The sequence spans 122 residues: Small ribosomal subunit protein uS13 (122 aa).

The tract at residues 95–122 is disordered; sequence GLPVHGQRTKTNARTRKGPARTVAGKKK.

The protein belongs to the universal ribosomal protein uS13 family. Part of the 30S ribosomal subunit. Forms a loose heterodimer with protein S19. Forms two bridges to the 50S subunit in the 70S ribosome.

Its function is as follows. Located at the top of the head of the 30S subunit, it contacts several helices of the 16S rRNA. In the 70S ribosome it contacts the 23S rRNA (bridge B1a) and protein L5 of the 50S subunit (bridge B1b), connecting the 2 subunits; these bridges are implicated in subunit movement. Contacts the tRNAs in the A and P-sites. The protein is Small ribosomal subunit protein uS13 of Geotalea uraniireducens (strain Rf4) (Geobacter uraniireducens).